The primary structure comprises 101 residues: Acylphosphatase (101 aa).

The 89-residue stretch at 11–99 folds into the Acylphosphatase-like domain; that stretch reads SWLVKAIGRV…PRLNRFDRLP (89 aa). Residues R26 and N44 contribute to the active site.

Belongs to the acylphosphatase family.

The enzyme catalyses an acyl phosphate + H2O = a carboxylate + phosphate + H(+). The polypeptide is Acylphosphatase (acyP) (Polaromonas naphthalenivorans (strain CJ2)).